The sequence spans 690 residues: Ligand of Numb protein X 2 (690 aa).

The RING-type zinc-finger motif lies at 50–88; sequence CHICLQPLLQPLDTPCGHTFCYKCLRNFLQEKDFCPLDR. The interval 198 to 224 is disordered; it reads STWSEEPGLDNPAFEESAGADTTQQPL. Residues 208-211 carry the NPXY motif motif; the sequence is NPAF. 4 PDZ domains span residues 233 to 318, 339 to 422, 468 to 554, and 600 to 688; these read TIEI…LRER, QVAL…ARPG, HITV…KALE, and DIVL…WPGS. The segment at 418–455 is disordered; the sequence is IARPGKPQPGNTIREAGNHSSSSQHHTPPPYYSRPSSH.

Interacts with the phosphotyrosine interaction domain of NUMB.

The polypeptide is Ligand of Numb protein X 2 (LNX2) (Homo sapiens (Human)).